We begin with the raw amino-acid sequence, 355 residues long: Ornithine transcarbamylase, mitochondrial (355 aa).

The N-terminal 35 residues, 1–35, are a transit peptide targeting the mitochondrion; that stretch reads MLFINLRTLLNNAALRNGHNFVVRNFRCGQPVQDK. N6-acetyllysine; alternate is present on Lys-71. Lys-71 bears the N6-succinyllysine; alternate mark. Lys-81 carries the post-translational modification N6-succinyllysine. The residue at position 89 (Lys-89) is an N6-acetyllysine; alternate. Position 89 is an N6-succinyllysine; alternate (Lys-89). 91 to 95 lines the carbamoyl phosphate pocket; sequence STRTR. Ser-134 is modified (phosphoserine). Arg-142 provides a ligand contact to carbamoyl phosphate. Arg-142 lines the L-ornithine pocket. The residue at position 145 (Lys-145) is an N6-acetyllysine; alternate. At Lys-145 the chain carries N6-succinyllysine; alternate. A carbamoyl phosphate-binding site is contributed by His-169. Residue Asn-200 participates in L-ornithine binding. N6-acetyllysine; alternate occurs at positions 222, 232, and 239. 3 positions are modified to N6-succinyllysine; alternate: Lys-222, Lys-232, and Lys-239. Lys-244 carries the N6-acetyllysine modification. Position 264–268 (264–268) interacts with L-ornithine; sequence DTWIS. N6-succinyllysine is present on residues Lys-275 and Lys-290. The residue at position 293 (Lys-293) is an N6-acetyllysine; alternate. Residue Lys-293 is modified to N6-succinyllysine; alternate. 303–306 contributes to the L-ornithine binding site; sequence HCLP. The active site involves Cys-304. The residue at position 308 (Lys-308) is an N6-acetyllysine; alternate. The residue at position 308 (Lys-308) is an N6-succinyllysine; alternate. Arg-331 contacts carbamoyl phosphate. Residue Arg-331 coordinates L-ornithine.

It belongs to the aspartate/ornithine carbamoyltransferase superfamily. OTCase family. Homotrimer. In terms of processing, acetylation at Lys-89 negatively regulates ornithine carbamoyltransferase activity in response to nutrient signals.

It localises to the mitochondrion matrix. It catalyses the reaction carbamoyl phosphate + L-ornithine = L-citrulline + phosphate + H(+). The protein operates within nitrogen metabolism; urea cycle; L-citrulline from L-ornithine and carbamoyl phosphate: step 1/1. Negatively regulated by lysine acetylation. Catalyzes the second step of the urea cycle, the condensation of carbamoyl phosphate with L-ornithine to form L-citrulline. The urea cycle ensures the detoxification of ammonia by converting it to urea for excretion. The protein is Ornithine transcarbamylase, mitochondrial of Ovis aries (Sheep).